The chain runs to 494 residues: Nuclear distribution protein PAC1 (494 aa).

One can recognise a LisH domain in the interval 14 to 46; that stretch reads QKNELDKSVLRYLNWNYKQTVRHEHAQDYESVR. Residues 90 to 123 are a coiled coil; that stretch reads NSIVRLQKKIIELEQNTETLVSQIKDLNTQVSEL. WD repeat units lie at residues 153–192, 196–244, 251–292, 295–334, 347–395, 415–454, and 457–492; these read NVESSVTSVKLHPNLPIVFVATDHGKLYAFDLFNYTIPLA, SHTK…CKFQ, GHEH…SLKT, PHSQWVRSIDVLGDYIISGSHDTTLRLTHWPSGNGLSVGT, HFIE…LMAH, GHLSWVRDISIRGQYLFSCADDKSVRCWDLNTGQCLHVWE, and HTGFVNCLDLDVDFDSNVTPRQMMVTGGLDCKSNVF.

Belongs to the WD repeat LIS1/nudF family. Self-associates. Interacts with NDL1 and dynein.

Its subcellular location is the cytoplasm. It is found in the cytoskeleton. The protein localises to the spindle pole. Functionally, positively regulates the activity of the minus-end directed microtubule motor protein dynein. Plays a central role in positioning the mitotic spindle at the bud neck during cell division. Targets cytoplasmic dynein to microtubule plus ends, thereby promoting dynein-mediated microtubule sliding along the bud cortex and consequently the movement of the mitotic spindle to the bud neck. This Saccharomyces cerevisiae (strain RM11-1a) (Baker's yeast) protein is Nuclear distribution protein PAC1.